A 317-amino-acid chain; its full sequence is D-alanine--D-alanine ligase (317 aa).

Residues 103 to 299 (KHIFRSLNID…FNELVKIIIE (197 aa)) enclose the ATP-grasp domain. 130 to 183 (KIDYPYVLKPINEGSSIGVYIIFSHEDYLELKDNSSTIMEKMIVEEYIPGIELH) contacts ATP. Positions 251, 265, and 267 each coordinate Mg(2+).

It belongs to the D-alanine--D-alanine ligase family. Mg(2+) is required as a cofactor. Requires Mn(2+) as cofactor.

It is found in the cytoplasm. It catalyses the reaction 2 D-alanine + ATP = D-alanyl-D-alanine + ADP + phosphate + H(+). The protein operates within cell wall biogenesis; peptidoglycan biosynthesis. In terms of biological role, cell wall formation. This Wolbachia sp. subsp. Drosophila simulans (strain wRi) protein is D-alanine--D-alanine ligase.